Reading from the N-terminus, the 645-residue chain is UPF0313 protein CLB_0243 (645 aa).

One can recognise a Radical SAM core domain in the interval 295-566 (AIKEVKFSIT…RMQRALLQFS (272 aa)). [4Fe-4S] cluster is bound by residues C309, C313, and C316. The segment at 598 to 645 (NKPYKKSHKKNNAKNNNNHYNKNNNYNKNKDISKKNKKNSLSKHKKRK) is disordered. Basic residues predominate over residues 600–609 (PYKKSHKKNN). The segment covering 610–624 (AKNNNNHYNKNNNYN) has biased composition (low complexity). Residues 632 to 645 (KNKKNSLSKHKKRK) show a composition bias toward basic residues.

Belongs to the UPF0313 family. It depends on [4Fe-4S] cluster as a cofactor.

In Clostridium botulinum (strain ATCC 19397 / Type A), this protein is UPF0313 protein CLB_0243.